The sequence spans 403 residues: JmjC domain-containing histone demethylation protein 1 (403 aa).

The JmjC domain occupies 141–328; the sequence is WSLREWCNYF…QQLKIVDVEK (188 aa). T221 serves as a coordination point for substrate. Residues H224 and D226 each coordinate Fe cation. Substrate is bound at residue K241. Position 296 (H296) interacts with Fe cation.

Belongs to the JHDM1 histone demethylase family. Requires Fe(2+) as cofactor.

The protein localises to the nucleus. It catalyses the reaction N(6),N(6)-dimethyl-L-lysyl(36)-[histone H3] + 2 2-oxoglutarate + 2 O2 = L-lysyl(36)-[histone H3] + 2 formaldehyde + 2 succinate + 2 CO2. Histone demethylase that specifically demethylates 'Lys-36' of histone H3, thereby playing a central role in histone code. The sequence is that of JmjC domain-containing histone demethylation protein 1 (JHD1) from Candida glabrata (strain ATCC 2001 / BCRC 20586 / JCM 3761 / NBRC 0622 / NRRL Y-65 / CBS 138) (Yeast).